A 1097-amino-acid polypeptide reads, in one-letter code: RecBCD enzyme subunit RecC (1097 aa).

The protein belongs to the RecC family. As to quaternary structure, heterotrimer of RecB, RecC and RecD. All subunits contribute to DNA-binding.

In terms of biological role, a helicase/nuclease that prepares dsDNA breaks (DSB) for recombinational DNA repair. Binds to DSBs and unwinds DNA via a highly rapid and processive ATP-dependent bidirectional helicase activity. Holoenzyme degrades any linearized DNA that is unable to undergo homologous recombination. In the holoenzyme this subunit recognizes the wild-type Chi sequence, and when added to isolated RecB increases its ATP-dependent helicase processivity. Unlike the case in E.coli, suppresses RecA-dependent homologous recombination, is instead required for single-strand annealing pathway repair of DSB. This Mycobacterium tuberculosis (strain ATCC 25618 / H37Rv) protein is RecBCD enzyme subunit RecC.